A 358-amino-acid polypeptide reads, in one-letter code: Probable translocation protein Y4yK (358 aa).

This sequence belongs to the FliN/MopA/SpaO family.

In terms of biological role, could be involved in the secretion of an unknown factor. This is Probable translocation protein Y4yK from Sinorhizobium fredii (strain NBRC 101917 / NGR234).